Reading from the N-terminus, the 397-residue chain is L-asparaginase-like protein GM15681 (397 aa).

The first 22 residues, 1-22 (MLAQSCCLRLLILLLLFTSICS), serve as a signal peptide directing secretion. 3 cysteine pairs are disulfide-bonded: C90-C95, C189-C205, and C344-C371.

Belongs to the Ntn-hydrolase family.

This Drosophila sechellia (Fruit fly) protein is L-asparaginase-like protein GM15681.